The chain runs to 97 residues: Ferredoxin-like protein YdiT (97 aa).

The protein belongs to the bacterial-type ferredoxin family. FixX subfamily.

Could be a 3Fe-4S cluster-containing protein. Probably participates in a redox process with YdiQ, YdiR and YdiS. The chain is Ferredoxin-like protein YdiT (ydiT) from Escherichia coli (strain K12).